The sequence spans 240 residues: Probable alpha-aspartyl dipeptidase (240 aa).

Catalysis depends on charge relay system residues serine 125, aspartate 140, and histidine 162.

The protein belongs to the peptidase S51 family.

The protein resides in the cytoplasm. The enzyme catalyses Dipeptidase E catalyzes the hydrolysis of dipeptides Asp-|-Xaa. It does not act on peptides with N-terminal Glu, Asn or Gln, nor does it cleave isoaspartyl peptides.. Its function is as follows. Hydrolyzes dipeptides containing N-terminal aspartate residues. This is Probable alpha-aspartyl dipeptidase from Drosophila melanogaster (Fruit fly).